A 183-amino-acid polypeptide reads, in one-letter code: Crossover junction endodeoxyribonuclease RuvC (183 aa).

Active-site residues include Asp-7, Glu-66, and Asp-138. Residues Asp-7, Glu-66, and Asp-138 each contribute to the Mg(2+) site.

It belongs to the RuvC family. As to quaternary structure, homodimer which binds Holliday junction (HJ) DNA. The HJ becomes 2-fold symmetrical on binding to RuvC with unstacked arms; it has a different conformation from HJ DNA in complex with RuvA. In the full resolvosome a probable DNA-RuvA(4)-RuvB(12)-RuvC(2) complex forms which resolves the HJ. Requires Mg(2+) as cofactor.

The protein localises to the cytoplasm. The enzyme catalyses Endonucleolytic cleavage at a junction such as a reciprocal single-stranded crossover between two homologous DNA duplexes (Holliday junction).. Its function is as follows. The RuvA-RuvB-RuvC complex processes Holliday junction (HJ) DNA during genetic recombination and DNA repair. Endonuclease that resolves HJ intermediates. Cleaves cruciform DNA by making single-stranded nicks across the HJ at symmetrical positions within the homologous arms, yielding a 5'-phosphate and a 3'-hydroxyl group; requires a central core of homology in the junction. The consensus cleavage sequence is 5'-(A/T)TT(C/G)-3'. Cleavage occurs on the 3'-side of the TT dinucleotide at the point of strand exchange. HJ branch migration catalyzed by RuvA-RuvB allows RuvC to scan DNA until it finds its consensus sequence, where it cleaves and resolves the cruciform DNA. This is Crossover junction endodeoxyribonuclease RuvC from Burkholderia ambifaria (strain ATCC BAA-244 / DSM 16087 / CCUG 44356 / LMG 19182 / AMMD) (Burkholderia cepacia (strain AMMD)).